A 421-amino-acid polypeptide reads, in one-letter code: MNTLQRRKTHQVRIDHITVGSEAPVVIQSMTNTDTADAKATALQIKELSDAGSEMVRITVNSPEAASKVAEIRRRLDDMGYATPLIGDFHFNGERLLAEFPECGKALSKYRINPGNVGKGVKGDEKFAFMIRTAAENDKAVRIGVNWGSLDQSLAKRMMDANLASSAPKPPEEVTKEALIVSALESAEKAVLLGLPEDKIILSCKVSAVQDLIQVYRELGSRCAYPLHLGLTEAGMGSKGIVASTAALSVLLQEGIGDTIRISLTPEPGSPRTQEVVVGQEILQTMGLRSFTPMVTACPGCGRTTSTVFQELAQDVQNYLRQKMSIWRTLYPGVESLNVAVMGCVVNGPGESKLADIGISLPGTGETPVAPVYVDGERKVTLKGDNIATEFLAIVEEYVKTNYGENGLKRHQGKVIPIHSL.

Residues Cys298, Cys301, Cys344, and Glu351 each contribute to the [4Fe-4S] cluster site.

It belongs to the IspG family. [4Fe-4S] cluster is required as a cofactor.

It carries out the reaction (2E)-4-hydroxy-3-methylbut-2-enyl diphosphate + oxidized [flavodoxin] + H2O + 2 H(+) = 2-C-methyl-D-erythritol 2,4-cyclic diphosphate + reduced [flavodoxin]. It functions in the pathway isoprenoid biosynthesis; isopentenyl diphosphate biosynthesis via DXP pathway; isopentenyl diphosphate from 1-deoxy-D-xylulose 5-phosphate: step 5/6. Converts 2C-methyl-D-erythritol 2,4-cyclodiphosphate (ME-2,4cPP) into 1-hydroxy-2-methyl-2-(E)-butenyl 4-diphosphate. This Neisseria meningitidis serogroup B (strain ATCC BAA-335 / MC58) protein is 4-hydroxy-3-methylbut-2-en-1-yl diphosphate synthase (flavodoxin).